The sequence spans 294 residues: Bifunctional protein FolD (294 aa).

Residues 166-168, serine 195, and isoleucine 236 each bind NADP(+); that span reads GRS.

Belongs to the tetrahydrofolate dehydrogenase/cyclohydrolase family. Homodimer.

The catalysed reaction is (6R)-5,10-methylene-5,6,7,8-tetrahydrofolate + NADP(+) = (6R)-5,10-methenyltetrahydrofolate + NADPH. It catalyses the reaction (6R)-5,10-methenyltetrahydrofolate + H2O = (6R)-10-formyltetrahydrofolate + H(+). The protein operates within one-carbon metabolism; tetrahydrofolate interconversion. Its function is as follows. Catalyzes the oxidation of 5,10-methylenetetrahydrofolate to 5,10-methenyltetrahydrofolate and then the hydrolysis of 5,10-methenyltetrahydrofolate to 10-formyltetrahydrofolate. The polypeptide is Bifunctional protein FolD (Chloroherpeton thalassium (strain ATCC 35110 / GB-78)).